Here is a 252-residue protein sequence, read N- to C-terminus: Carbohydrate deacetylase (252 aa).

Mg(2+)-binding residues include H59 and H122.

The protein belongs to the YdjC deacetylase family. Homodimer. Requires Mg(2+) as cofactor.

In terms of biological role, probably catalyzes the deacetylation of acetylated carbohydrates an important step in the degradation of oligosaccharides. This is Carbohydrate deacetylase from Vibrio cholerae serotype O1 (strain ATCC 39315 / El Tor Inaba N16961).